Reading from the N-terminus, the 92-residue chain is Small ribosomal subunit protein uS19 (92 aa).

The protein belongs to the universal ribosomal protein uS19 family.

Its function is as follows. Protein S19 forms a complex with S13 that binds strongly to the 16S ribosomal RNA. In Shewanella amazonensis (strain ATCC BAA-1098 / SB2B), this protein is Small ribosomal subunit protein uS19.